A 136-amino-acid polypeptide reads, in one-letter code: Protein NrdI (136 aa).

This sequence belongs to the NrdI family.

In terms of biological role, probably involved in ribonucleotide reductase function. The polypeptide is Protein NrdI (Salmonella agona (strain SL483)).